The primary structure comprises 130 residues: Small ribosomal subunit protein uS11c (130 aa).

The protein belongs to the universal ribosomal protein uS11 family. As to quaternary structure, part of the 30S ribosomal subunit.

The protein localises to the plastid. It is found in the chloroplast. The sequence is that of Small ribosomal subunit protein uS11c from Adiantum capillus-veneris (Maidenhair fern).